We begin with the raw amino-acid sequence, 122 residues long: Large ribosomal subunit protein uL14 (122 aa).

It belongs to the universal ribosomal protein uL14 family. In terms of assembly, part of the 50S ribosomal subunit. Forms a cluster with proteins L3 and L19. In the 70S ribosome, L14 and L19 interact and together make contacts with the 16S rRNA in bridges B5 and B8.

In terms of biological role, binds to 23S rRNA. Forms part of two intersubunit bridges in the 70S ribosome. The chain is Large ribosomal subunit protein uL14 from Trichlorobacter lovleyi (strain ATCC BAA-1151 / DSM 17278 / SZ) (Geobacter lovleyi).